A 581-amino-acid polypeptide reads, in one-letter code: Arginine--tRNA ligase (581 aa).

The 'HIGH' region motif lies at 126–136 (PNLAKEMHVGH).

The protein belongs to the class-I aminoacyl-tRNA synthetase family. In terms of assembly, monomer.

The protein localises to the cytoplasm. The catalysed reaction is tRNA(Arg) + L-arginine + ATP = L-arginyl-tRNA(Arg) + AMP + diphosphate. This chain is Arginine--tRNA ligase, found in Shewanella halifaxensis (strain HAW-EB4).